A 612-amino-acid polypeptide reads, in one-letter code: Protein hinderin (612 aa).

Phosphoserine is present on serine 20. Residues 90 to 166 adopt a coiled-coil conformation; the sequence is LKDLCLEDKR…CQELLSLYQK (77 aa). Serine 178 carries the phosphoserine modification. Residues 362 to 406 adopt a coiled-coil conformation; sequence IEKQLSEDRRQQLMLQKMELEIEKERLQHLLAQQETKLLLKQQQL. The segment covering 462–477 has biased composition (polar residues); it reads STSFKKCPDSPNSGQN. Disordered stretches follow at residues 462-484 and 509-598; these read STSF…KKTV and ETVT…RSPE. 3 positions are modified to phosphoserine: serine 471, serine 527, and serine 558. Composition is skewed to polar residues over residues 555-568 and 575-585; these read QSLS…SQPH and TWSTLRPTPQK.

Interacts (via N- and C-terminal domains) with SMC3 (via central hinge region).

Functionally, competes with SMC1 for binding to SMC3. May affect the availability of SMC3 to engage in the formation of multimeric protein complexes. The sequence is that of Protein hinderin (Kiaa1328) from Mus musculus (Mouse).